The chain runs to 494 residues: Glycerol kinase (494 aa).

Threonine 13 is an ADP binding site. 3 residues coordinate ATP: threonine 13, threonine 14, and serine 15. Threonine 13 lines the sn-glycerol 3-phosphate pocket. Arginine 17 is a binding site for ADP. Sn-glycerol 3-phosphate is bound by residues arginine 83, glutamate 84, tyrosine 135, and aspartate 244. Residues arginine 83, glutamate 84, tyrosine 135, aspartate 244, and glutamine 245 each contribute to the glycerol site. 2 residues coordinate ADP: threonine 266 and glycine 309. ATP is bound by residues threonine 266, glycine 309, glutamine 313, and glycine 410. ADP-binding residues include glycine 410 and asparagine 414.

It belongs to the FGGY kinase family.

It carries out the reaction glycerol + ATP = sn-glycerol 3-phosphate + ADP + H(+). It participates in polyol metabolism; glycerol degradation via glycerol kinase pathway; sn-glycerol 3-phosphate from glycerol: step 1/1. Its activity is regulated as follows. Inhibited by fructose 1,6-bisphosphate (FBP). Its function is as follows. Key enzyme in the regulation of glycerol uptake and metabolism. Catalyzes the phosphorylation of glycerol to yield sn-glycerol 3-phosphate. In Shewanella oneidensis (strain ATCC 700550 / JCM 31522 / CIP 106686 / LMG 19005 / NCIMB 14063 / MR-1), this protein is Glycerol kinase.